Here is a 297-residue protein sequence, read N- to C-terminus: UDP-N-acetylenolpyruvoylglucosamine reductase (297 aa).

The 166-residue stretch at 24–189 (KVGGNAEIFF…LKAIFKVNKG (166 aa)) folds into the FAD-binding PCMH-type domain. Residue Arg169 is part of the active site. Ser218 acts as the Proton donor in catalysis. Glu289 is an active-site residue.

Belongs to the MurB family. The cofactor is FAD.

The protein localises to the cytoplasm. It catalyses the reaction UDP-N-acetyl-alpha-D-muramate + NADP(+) = UDP-N-acetyl-3-O-(1-carboxyvinyl)-alpha-D-glucosamine + NADPH + H(+). The protein operates within cell wall biogenesis; peptidoglycan biosynthesis. Cell wall formation. This chain is UDP-N-acetylenolpyruvoylglucosamine reductase, found in Rickettsia canadensis (strain McKiel).